The sequence spans 280 residues: Probable endonuclease 4 (280 aa).

Zn(2+) is bound by residues His69, His109, Glu145, Asp179, His182, His216, Asp229, His231, and Glu261.

The protein belongs to the AP endonuclease 2 family. It depends on Zn(2+) as a cofactor.

The enzyme catalyses Endonucleolytic cleavage to 5'-phosphooligonucleotide end-products.. In terms of biological role, endonuclease IV plays a role in DNA repair. It cleaves phosphodiester bonds at apurinic or apyrimidinic (AP) sites, generating a 3'-hydroxyl group and a 5'-terminal sugar phosphate. This Pelodictyon phaeoclathratiforme (strain DSM 5477 / BU-1) protein is Probable endonuclease 4.